Here is a 511-residue protein sequence, read N- to C-terminus: Bifunctional purine biosynthesis protein PurH (511 aa).

Positions 1 to 145 constitute an MGS-like domain; the sequence is MKKRALVSVS…KNHKFVSVIV (145 aa).

This sequence belongs to the PurH family.

It carries out the reaction (6R)-10-formyltetrahydrofolate + 5-amino-1-(5-phospho-beta-D-ribosyl)imidazole-4-carboxamide = 5-formamido-1-(5-phospho-D-ribosyl)imidazole-4-carboxamide + (6S)-5,6,7,8-tetrahydrofolate. The catalysed reaction is IMP + H2O = 5-formamido-1-(5-phospho-D-ribosyl)imidazole-4-carboxamide. It functions in the pathway purine metabolism; IMP biosynthesis via de novo pathway; 5-formamido-1-(5-phospho-D-ribosyl)imidazole-4-carboxamide from 5-amino-1-(5-phospho-D-ribosyl)imidazole-4-carboxamide (10-formyl THF route): step 1/1. The protein operates within purine metabolism; IMP biosynthesis via de novo pathway; IMP from 5-formamido-1-(5-phospho-D-ribosyl)imidazole-4-carboxamide: step 1/1. The protein is Bifunctional purine biosynthesis protein PurH of Bacillus thuringiensis (strain Al Hakam).